The chain runs to 192 residues: MITISDTAQAHFVKLLADQPEGTHIRVFVISPGTAQAECGVSYCPPDAAEADDVELPFNGFSAMVDEKSAPFLDDASIDFVTDQLGSQLTLKAPNAKMRKVSGDAPLVERIEYIIQSEINPQLASHGGNIMLVEITEAGVAVLQFGGGCNGCSQVDITLKDGIEKQLLDMFPTELTGVRDVTEHEHGEHSYA.

[4Fe-4S] cluster contacts are provided by C149 and C152.

It belongs to the NfuA family. As to quaternary structure, homodimer. It depends on [4Fe-4S] cluster as a cofactor.

Its function is as follows. Involved in iron-sulfur cluster biogenesis. Binds a 4Fe-4S cluster, can transfer this cluster to apoproteins, and thereby intervenes in the maturation of Fe/S proteins. Could also act as a scaffold/chaperone for damaged Fe/S proteins. The sequence is that of Fe/S biogenesis protein NfuA from Shewanella frigidimarina (strain NCIMB 400).